Here is a 103-residue protein sequence, read N- to C-terminus: N(4)-acetylcytidine amidohydrolase (103 aa).

Residues 6-100 (ITFFQRFQDD…GESQFYVIEF (95 aa)) enclose the ASCH domain. The active-site Proton acceptor is K21. The active-site Nucleophile is T24. The active-site Proton donor is the E74.

Belongs to the N(4)-acetylcytidine amidohydrolase family.

The enzyme catalyses N(4)-acetylcytidine + H2O = cytidine + acetate + H(+). The catalysed reaction is N(4)-acetyl-2'-deoxycytidine + H2O = 2'-deoxycytidine + acetate + H(+). It carries out the reaction N(4)-acetylcytosine + H2O = cytosine + acetate + H(+). Catalyzes the hydrolysis of N(4)-acetylcytidine (ac4C). This Klebsiella pneumoniae subsp. pneumoniae (strain ATCC 700721 / MGH 78578) protein is N(4)-acetylcytidine amidohydrolase.